We begin with the raw amino-acid sequence, 647 residues long: Threonine--tRNA ligase (647 aa).

A TGS domain is found at 1–61 (MINITFPDGA…TEDGSIEIVT (61 aa)). The tract at residues 242 to 540 (DHRKLGKELD…LIENYKGAFP (299 aa)) is catalytic. Zn(2+)-binding residues include Cys336, His387, and His517.

This sequence belongs to the class-II aminoacyl-tRNA synthetase family. In terms of assembly, homodimer. It depends on Zn(2+) as a cofactor.

Its subcellular location is the cytoplasm. The enzyme catalyses tRNA(Thr) + L-threonine + ATP = L-threonyl-tRNA(Thr) + AMP + diphosphate + H(+). Its function is as follows. Catalyzes the attachment of threonine to tRNA(Thr) in a two-step reaction: L-threonine is first activated by ATP to form Thr-AMP and then transferred to the acceptor end of tRNA(Thr). Also edits incorrectly charged L-seryl-tRNA(Thr). This is Threonine--tRNA ligase from Streptococcus pneumoniae (strain ATCC 700669 / Spain 23F-1).